We begin with the raw amino-acid sequence, 266 residues long: Ribonuclease 3 (266 aa).

In terms of domain architecture, RNase III spans 8–130 (LARLTKKLGY…IIGAVYLDSN (123 aa)). Residue Glu43 coordinates Mg(2+). Residue Asp47 is part of the active site. The Mg(2+) site is built by Asp116 and Glu119. The active site involves Glu119. The 71-residue stretch at 157–227 (DPKTRLQEFL…AQQILALIEK (71 aa)) folds into the DRBM domain. The interval 229 to 266 (REQEKEVKIKPTKQAKLANPRHTKSNPSSSSKKSSTRK) is disordered. The span at 253–266 (SNPSSSSKKSSTRK) shows a compositional bias: low complexity.

It belongs to the ribonuclease III family. Homodimer. Mg(2+) is required as a cofactor.

The protein resides in the cytoplasm. It carries out the reaction Endonucleolytic cleavage to 5'-phosphomonoester.. Its function is as follows. Digests double-stranded RNA. Involved in the processing of primary rRNA transcript to yield the immediate precursors to the large and small rRNAs (23S and 16S). Processes some mRNAs, and tRNAs when they are encoded in the rRNA operon. Processes pre-crRNA and tracrRNA of type II CRISPR loci if present in the organism. This Colwellia psychrerythraea (strain 34H / ATCC BAA-681) (Vibrio psychroerythus) protein is Ribonuclease 3.